A 250-amino-acid chain; its full sequence is Uracil-DNA glycosylase (250 aa).

The active-site Proton acceptor is Asp91.

It belongs to the uracil-DNA glycosylase (UDG) superfamily. UNG family.

The protein localises to the host nucleus. It carries out the reaction Hydrolyzes single-stranded DNA or mismatched double-stranded DNA and polynucleotides, releasing free uracil.. Functionally, excises uracil residues from the DNA which can arise as a result of misincorporation of dUMP residues by DNA polymerase or due to deamination of cytosine. Its function is as follows. Excises uracil residues from the DNA which can arise as a result of misincorporation of dUMP residues by DNA polymerase or deamination of cytosines. Therefore may reduce deleterious uracil incorporation into the viral genome, particularly in terminally differentiated cells which lack DNA repair enzymes. In Homo sapiens (Human), this protein is Uracil-DNA glycosylase (UL114).